Consider the following 447-residue polypeptide: Na(+)-translocating NADH-quinone reductase subunit A (447 aa).

This sequence belongs to the NqrA family. Composed of six subunits; NqrA, NqrB, NqrC, NqrD, NqrE and NqrF.

The enzyme catalyses a ubiquinone + n Na(+)(in) + NADH + H(+) = a ubiquinol + n Na(+)(out) + NAD(+). In terms of biological role, NQR complex catalyzes the reduction of ubiquinone-1 to ubiquinol by two successive reactions, coupled with the transport of Na(+) ions from the cytoplasm to the periplasm. NqrA to NqrE are probably involved in the second step, the conversion of ubisemiquinone to ubiquinol. This is Na(+)-translocating NADH-quinone reductase subunit A from Hahella chejuensis (strain KCTC 2396).